The following is a 465-amino-acid chain: Ribulose bisphosphate carboxylase large chain (465 aa).

K4 carries the N6,N6,N6-trimethyllysine modification. Substrate contacts are provided by N113 and T163. K165 acts as the Proton acceptor in catalysis. K167 lines the substrate pocket. Mg(2+)-binding residues include K191, D193, and E194. K191 bears the N6-carboxylysine mark. H284 serves as the catalytic Proton acceptor. Residues R285, H317, and S369 each coordinate substrate.

This sequence belongs to the RuBisCO large chain family. Type I subfamily. In terms of assembly, heterohexadecamer of 8 large chains and 8 small chains; disulfide-linked. The disulfide link is formed within the large subunit homodimers. Requires Mg(2+) as cofactor. Post-translationally, the disulfide bond which can form in the large chain dimeric partners within the hexadecamer appears to be associated with oxidative stress and protein turnover.

It is found in the plastid. The protein resides in the chloroplast. It carries out the reaction 2 (2R)-3-phosphoglycerate + 2 H(+) = D-ribulose 1,5-bisphosphate + CO2 + H2O. It catalyses the reaction D-ribulose 1,5-bisphosphate + O2 = 2-phosphoglycolate + (2R)-3-phosphoglycerate + 2 H(+). RuBisCO catalyzes two reactions: the carboxylation of D-ribulose 1,5-bisphosphate, the primary event in carbon dioxide fixation, as well as the oxidative fragmentation of the pentose substrate in the photorespiration process. Both reactions occur simultaneously and in competition at the same active site. The protein is Ribulose bisphosphate carboxylase large chain of Cyrilla racemiflora (Swamp titi).